Here is a 151-residue protein sequence, read N- to C-terminus: Acidic phospholipase A2 6 (151 aa).

The signal sequence occupies residues 1–27; it reads MYPAHLLVLLAVCVSLLGAASIPARPL. 7 disulfide bridges follow: cysteine 38–cysteine 104, cysteine 54–cysteine 151, cysteine 56–cysteine 72, cysteine 71–cysteine 132, cysteine 78–cysteine 125, cysteine 88–cysteine 118, and cysteine 111–cysteine 123. Ca(2+) contacts are provided by tyrosine 55, glycine 57, and glycine 59. Histidine 75 is a catalytic residue. Residue aspartate 76 participates in Ca(2+) binding. Residue aspartate 126 is part of the active site.

It belongs to the phospholipase A2 family. Group I subfamily. D49 sub-subfamily. The cofactor is Ca(2+). Expressed by the venom gland.

The protein localises to the secreted. The catalysed reaction is a 1,2-diacyl-sn-glycero-3-phosphocholine + H2O = a 1-acyl-sn-glycero-3-phosphocholine + a fatty acid + H(+). Functionally, PLA2 catalyzes the calcium-dependent hydrolysis of the 2-acyl groups in 3-sn-phosphoglycerides. In Tropidechis carinatus (Australian rough-scaled snake), this protein is Acidic phospholipase A2 6.